We begin with the raw amino-acid sequence, 205 residues long: Probable GTP-binding protein EngB (205 aa).

In terms of domain architecture, EngB-type G spans 27–201; that stretch reads QGMEVAFAGR…QNKLNAWFSG (175 aa). Residues 35-42, 62-66, 80-83, 147-150, and 180-182 each bind GTP; these read GRSNAGKS, GRTQL, DLPG, TKVD, and FSS. Residues serine 42 and threonine 64 each contribute to the Mg(2+) site.

This sequence belongs to the TRAFAC class TrmE-Era-EngA-EngB-Septin-like GTPase superfamily. EngB GTPase family. Requires Mg(2+) as cofactor.

Its function is as follows. Necessary for normal cell division and for the maintenance of normal septation. This is Probable GTP-binding protein EngB from Hamiltonella defensa subsp. Acyrthosiphon pisum (strain 5AT).